The following is a 630-amino-acid chain: CREB-regulated transcription coactivator 1 (630 aa).

Phosphoserine occurs at positions 64 and 113. 4 disordered regions span residues alanine 142–aspartate 174, glycine 187–isoleucine 221, serine 256–leucine 331, and glutamine 356–threonine 475. Threonine 149 is subject to Phosphothreonine. At serine 151 the chain carries Phosphoserine; by SIK1 and SIK2. Residues serine 151–serine 167 are compositionally biased toward polar residues. Threonine 161 is modified (phosphothreonine). A compositionally biased stretch (basic and acidic residues) spans glutamate 194–lysine 208. The Nuclear export signal signature appears at threonine 242–leucine 258. Residues serine 256–proline 270 show a composition bias toward pro residues. Polar residues-rich tracts occupy residues glycine 292–glutamine 301 and leucine 310–leucine 331. The segment covering glutamine 361 to glutamine 384 has biased composition (pro residues). Positions valine 385–proline 394 are enriched in low complexity. Polar residues-rich tracts occupy residues valine 414–proline 426 and proline 450–threonine 475.

It belongs to the TORC family. Binds, as a tetramer, through its N-terminal region, with the bZIP domain of CREB1. 'Arg-314' in the bZIP domain of CREB1 is essential for this interaction. Interaction, via its C-terminal, with TAF4, enhances recruitment of TAF4 to CREB1. Interacts with 14-3-3 proteins, including YWHAE/14-3-3 epsilon. Interacts with calmodulin-dependent catalytic subunit PPP3CA/calcineurin A. Phosphorylation/dephosphorylation states of Ser-151 are required for regulating transduction of CREB activity. TORCs are inactive when phosphorylated, and active when dephosphorylated at this site. This primary site of phosphorylation is mediated by SIKs (SIK1 and SIK2), is regulated by cAMP and calcium levels and is dependent on the phosphorylation of SIKs by LKB1. Highly expressed in developing cortical neurons, peaking during dendrite development.

It is found in the cytoplasm. The protein resides in the nucleus. In terms of biological role, transcriptional coactivator for CREB1 which activates transcription through both consensus and variant cAMP response element (CRE) sites. Acts as a coactivator, in the SIK/TORC signaling pathway, being active when dephosphorylated and acts independently of CREB1 'Ser-133' phosphorylation. Enhances the interaction of CREB1 with TAF4. Regulates the expression of specific CREB-activated genes such as the steroidogenic gene, StAR. Potent coactivator of PGC1alpha and inducer of mitochondrial biogenesis in muscle cells. In the hippocampus, involved in late-phase long-term potentiation (L-LTP) maintenance at the Schaffer collateral-CA1 synapses. May be required for dendritic growth of developing cortical neurons. In concert with SIK1, regulates the light-induced entrainment of the circadian clock. In response to light stimulus, coactivates the CREB-mediated transcription of PER1 which plays an important role in the photic entrainment of the circadian clock. The chain is CREB-regulated transcription coactivator 1 (Crtc1) from Rattus norvegicus (Rat).